We begin with the raw amino-acid sequence, 464 residues long: tRNA modification GTPase MnmE (464 aa).

(6S)-5-formyl-5,6,7,8-tetrahydrofolate is bound by residues arginine 25, glutamate 87, and lysine 130. One can recognise a TrmE-type G domain in the interval 226–386 (GLSVVLAGQP…LREELLRIAG (161 aa)). Asparagine 236 contacts K(+). Residues 236–241 (NVGKSS), 255–261 (TPIAGTT), and 280–283 (DTAG) contribute to the GTP site. Serine 240 provides a ligand contact to Mg(2+). K(+) is bound by residues threonine 255, isoleucine 257, and threonine 260. Threonine 261 is a Mg(2+) binding site. Lysine 464 contacts (6S)-5-formyl-5,6,7,8-tetrahydrofolate.

Belongs to the TRAFAC class TrmE-Era-EngA-EngB-Septin-like GTPase superfamily. TrmE GTPase family. Homodimer. Heterotetramer of two MnmE and two MnmG subunits. Requires K(+) as cofactor.

The protein resides in the cytoplasm. Its function is as follows. Exhibits a very high intrinsic GTPase hydrolysis rate. Involved in the addition of a carboxymethylaminomethyl (cmnm) group at the wobble position (U34) of certain tRNAs, forming tRNA-cmnm(5)s(2)U34. This Paraburkholderia xenovorans (strain LB400) protein is tRNA modification GTPase MnmE.